The primary structure comprises 334 residues: Anthranilate phosphoribosyltransferase (334 aa).

Residues glycine 79, 82-83 (GD), serine 87, 89-92 (NIST), 107-115 (KAGNRSISS), and serine 119 each bind 5-phospho-alpha-D-ribose 1-diphosphate. Glycine 79 serves as a coordination point for anthranilate. Residue serine 91 participates in Mg(2+) binding. Asparagine 110 contributes to the anthranilate binding site. Residue arginine 165 participates in anthranilate binding. 2 residues coordinate Mg(2+): aspartate 224 and glutamate 225.

It belongs to the anthranilate phosphoribosyltransferase family. In terms of assembly, homodimer. It depends on Mg(2+) as a cofactor.

It carries out the reaction N-(5-phospho-beta-D-ribosyl)anthranilate + diphosphate = 5-phospho-alpha-D-ribose 1-diphosphate + anthranilate. The protein operates within amino-acid biosynthesis; L-tryptophan biosynthesis; L-tryptophan from chorismate: step 2/5. Its function is as follows. Catalyzes the transfer of the phosphoribosyl group of 5-phosphorylribose-1-pyrophosphate (PRPP) to anthranilate to yield N-(5'-phosphoribosyl)-anthranilate (PRA). The chain is Anthranilate phosphoribosyltransferase from Streptococcus thermophilus (strain ATCC BAA-491 / LMD-9).